A 547-amino-acid polypeptide reads, in one-letter code: Inositol-tetrakisphosphate 1-kinase 6 (547 aa).

Lys-263 serves as a coordination point for 1D-myo-inositol 1,3,4-trisphosphate. Arg-317 and Lys-370 together coordinate ATP. Residues Leu-327 to Glu-539 form the ATP-grasp domain. Positions 381 and 415 each coordinate 1D-myo-inositol 1,3,4-trisphosphate. ATP contacts are provided by residues Gln-404–Lys-415, Ser-430, and Ser-450. The Mg(2+) site is built by Asp-497, Asp-511, and Asn-513. 1D-myo-inositol 1,3,4-trisphosphate contacts are provided by Asn-513 and Ser-517.

Belongs to the ITPK1 family. In terms of assembly, monomer. Mg(2+) is required as a cofactor. In terms of tissue distribution, highly expressed in embryos and at lower levels in roots, leaves, flowers and anthers.

The enzyme catalyses 1D-myo-inositol 3,4,5,6-tetrakisphosphate + ATP = 1D-myo-inositol 1,3,4,5,6-pentakisphosphate + ADP + H(+). It catalyses the reaction 1D-myo-inositol 1,3,4-trisphosphate + ATP = 1D-myo-inositol 1,3,4,5-tetrakisphosphate + ADP + H(+). The catalysed reaction is 1D-myo-inositol 1,3,4-trisphosphate + ATP = 1D-myo-inositol 1,3,4,6-tetrakisphosphate + ADP + H(+). Functionally, kinase that can phosphorylate various inositol polyphosphate such as Ins(3,4,5,6)P4 or Ins(1,3,4)P3 and participates in phytic acid biosynthesis in developing seeds. Phytic acid is the primary storage form of phosphorus in cereal grains and other plant seeds. The chain is Inositol-tetrakisphosphate 1-kinase 6 (ITPK6) from Oryza sativa subsp. japonica (Rice).